Reading from the N-terminus, the 309-residue chain is Non-homologous end-joining factor 1 (309 aa).

The interval 1-134 is globular head; that stretch reads MEAVLSALPW…TPVAVVCRQL (134 aa). The tract at residues 223–298 is C-terminal tail; it reads GKTGRKRKHS…AGSEDRSTSR (76 aa). Residues 223-309 form a disordered region; that stretch reads GKTGRKRKHS…KKKKAVGLFR (87 aa). Positions 243-252 are enriched in basic and acidic residues; that stretch reads HITDHQHISE. 2 stretches are compositionally biased toward polar residues: residues 253–265 and 273–290; these read STDVGPSLASQEH and RSQVANSQQTLPLSSTAG. The segment covering 297 to 309 has biased composition (basic residues); it reads SRAKKKKAVGLFR. The short motif at 299 to 309 is the XLM element; it reads AKKKKAVGLFR.

Belongs to the XRCC4-XLF family. XLF subfamily. As to quaternary structure, homodimer. Interacts with xrcc4; the interaction is direct and is mediated via a head-to-head interaction between N-terminal head regions. Component of the core long-range non-homologous end joining (NHEJ) complex (also named DNA-PK complex) composed of prkdc/DNA-PKcs, lig4, xrcc4, xrcc6/Ku70, xrcc5/Ku80 and nhej1/xlf.

It is found in the nucleus. The protein localises to the chromosome. In terms of biological role, DNA repair protein involved in DNA non-homologous end joining (NHEJ); it is required for double-strand break (DSB) repair and V(D)J recombination and is also involved in telomere maintenance. Plays a key role in NHEJ by promoting the ligation of various mismatched and non-cohesive ends. In some studies, has been shown to associate with xrcc4 to form alternating helical filaments that bridge DNA and act like a bandage, holding together the broken DNA until it is repaired. Alternatively, it has also been shown that rather than forming filaments, a single nhej1 dimer interacts through both head domains with xrcc4 to promote the close alignment of DNA ends. The xrcc4-nhej1/xlf subcomplex binds to the DNA fragments of a DSB in a highly diffusive manner and robustly bridges two independent DNA molecules, holding the broken DNA fragments in close proximity to one other. The mobility of the bridges ensures that the ends remain accessible for further processing by other repair factors. In Danio rerio (Zebrafish), this protein is Non-homologous end-joining factor 1 (nhej1).